A 365-amino-acid chain; its full sequence is MNKIAPAEIASMLNDWYLAIKKHEVEESSRLFEEVKPLLDDMEEDQEVLAYFSLLELRHKVLLHEARGQGFQHEEPSHMNATSDMLKYYFFLFEGMYEAYKNNYDIAIGLYKDAEQYLDNIPDPIEKAEFHLKVGKLYYKLGQNIVSLNHTRQAVKTFREETDYKKKLASALITMSGNFTEMSQFEEAEAYLDEAIRITSELEDHFFEAQLLHNFGLLHAQSGKSEEAVSKLEEALQNDEYARSAYYYHSAYLLIRELFKIKKKEQALSYYQDVKEKLTAEPNRICEAKIDILYAIYAEGGHAETFHLCKQHMDDLLSEKEYDSVRELSILAGERYRELELYKEAAHFFYEALQIEELIKRTEVI.

5 TPR repeats span residues 135 to 168 (GKLYYKLGQNIVSLNHTRQAVKTFREETDYKKKL), 169 to 202 (ASALITMSGNFTEMSQFEEAEAYLDEAIRITSEL), 209 to 242 (AQLLHNFGLLHAQSGKSEEAVSKLEEALQNDEYA), 244 to 284 (SAYY…EPNR), and 326 to 359 (RELSILAGERYRELELYKEAAHFFYEALQIEELI).

It belongs to the Rap family.

It localises to the cytoplasm. With respect to regulation, inhibited by PhrG. Functionally, involved in the regulation of expression of DegU-controlled genes. Inhibits the binding of DegU to the promoter regions of aprE, coding for an extracellular alkaline protease, and comK, a master regulator for development of genetic competence. RapG does not stimulate dephosphorylation of DegU-P. This is Regulatory protein RapG (rapG) from Bacillus subtilis (strain 168).